A 310-amino-acid chain; its full sequence is tRNA uridine(34) hydroxylase (310 aa).

The Rhodanese domain occupies serine 124 to serine 218. The Cysteine persulfide intermediate role is filled by cysteine 178.

This sequence belongs to the TrhO family.

It carries out the reaction uridine(34) in tRNA + AH2 + O2 = 5-hydroxyuridine(34) in tRNA + A + H2O. Functionally, catalyzes oxygen-dependent 5-hydroxyuridine (ho5U) modification at position 34 in tRNAs. The protein is tRNA uridine(34) hydroxylase of Pseudomonas putida (strain ATCC 47054 / DSM 6125 / CFBP 8728 / NCIMB 11950 / KT2440).